Consider the following 260-residue polypeptide: 4-hydroxy-tetrahydrodipicolinate reductase (260 aa).

NAD(+) is bound at residue 12 to 17; it reads GFRGKM. K40 lines the NADP(+) pocket. NAD(+) contacts are provided by residues 92–94 and 118–121; these read GTT and APNF. H148 serves as the catalytic Proton donor/acceptor. H149 provides a ligand contact to (S)-2,3,4,5-tetrahydrodipicolinate. K152 functions as the Proton donor in the catalytic mechanism. (S)-2,3,4,5-tetrahydrodipicolinate is bound at residue 158-159; it reads GT.

The protein belongs to the DapB family.

It localises to the cytoplasm. The catalysed reaction is (S)-2,3,4,5-tetrahydrodipicolinate + NAD(+) + H2O = (2S,4S)-4-hydroxy-2,3,4,5-tetrahydrodipicolinate + NADH + H(+). The enzyme catalyses (S)-2,3,4,5-tetrahydrodipicolinate + NADP(+) + H2O = (2S,4S)-4-hydroxy-2,3,4,5-tetrahydrodipicolinate + NADPH + H(+). The protein operates within amino-acid biosynthesis; L-lysine biosynthesis via DAP pathway; (S)-tetrahydrodipicolinate from L-aspartate: step 4/4. Its function is as follows. Catalyzes the conversion of 4-hydroxy-tetrahydrodipicolinate (HTPA) to tetrahydrodipicolinate. The polypeptide is 4-hydroxy-tetrahydrodipicolinate reductase (Lactococcus lactis subsp. lactis (strain IL1403) (Streptococcus lactis)).